A 405-amino-acid chain; its full sequence is S-arrestin (405 aa).

Phosphothreonine is present on Thr234.

It belongs to the arrestin family. Monomer. Homodimer. Homotetramer. Interacts with RHO (via the phosphorylated C-terminus). As to expression, detected in retina, in the proximal portion of the outer segment of rod photoreceptor cells (at protein level).

The protein resides in the cell projection. It is found in the cilium. The protein localises to the photoreceptor outer segment. Its subcellular location is the membrane. Binds to photoactivated, phosphorylated RHO and terminates RHO signaling via G-proteins by competing with G-proteins for the same binding site on RHO. May play a role in preventing light-dependent degeneration of retinal photoreceptor cells. This chain is S-arrestin (SAG), found in Homo sapiens (Human).